Consider the following 209-residue polypeptide: N-(5'-phosphoribosyl)anthranilate isomerase (209 aa).

This sequence belongs to the TrpF family.

The enzyme catalyses N-(5-phospho-beta-D-ribosyl)anthranilate = 1-(2-carboxyphenylamino)-1-deoxy-D-ribulose 5-phosphate. It functions in the pathway amino-acid biosynthesis; L-tryptophan biosynthesis; L-tryptophan from chorismate: step 3/5. In Granulibacter bethesdensis (strain ATCC BAA-1260 / CGDNIH1), this protein is N-(5'-phosphoribosyl)anthranilate isomerase.